The sequence spans 403 residues: 4,4'-dithiodibutanoate disulfide reductase (403 aa).

An FMN-binding site is contributed by glutamine 103. The active-site Proton donor is tyrosine 173. Position 348 to 349 (348 to 349 (AR)) interacts with FMN.

Belongs to the NADH:flavin oxidoreductase/NADH oxidase family. FMN is required as a cofactor.

The enzyme catalyses 2 4-sulfanylbutanoate + NAD(+) = 4,4'-disulfanyldibutanoate + NADH + H(+). Inactivated by cobalt, nickel and zinc ions. Functionally, involved in the degradation of the organic disulfide 4,4'-dithiodibutyric acid (DTDB). Catalyzes the initial cleavage of DTDB into 2 molecules of 4-mercaptobutyric acid (4MB). Low activities are observed with other disulfide compounds, such as 3,3'-dithiodipropionic acid DTDP, 3,3'-thiodipropionic acid TDP and DTNB. This chain is 4,4'-dithiodibutanoate disulfide reductase, found in Rhodococcus erythropolis (Arthrobacter picolinophilus).